Here is a 274-residue protein sequence, read N- to C-terminus: MKITAEMIKDLRQKTHAGMNECHKALQQTEGNIEKAIVFLREKGIIKAAQKQGRVTSEGITNIVFAGNNAFLYEINSETDFVSKNEHFQQLVKMLGEIILKKQLSNVKDLLAFNYQNKTVQELLFEKTSVLGENITLKRVLKVTKKPQESFGIYKHQGGRISVLVVLKNDCPSVSEDIAMHIAASKPQFLTPDKVDPTFLAEEKKILHKQAAKELSDKPAQMIEKIIENRLGKMLKDMCLSEQPFVKNADQKVKDYLKANNTDVVYYVRWEMGN.

An involved in Mg(2+) ion dislocation from EF-Tu region spans residues 79–82 (TDFV).

The protein belongs to the EF-Ts family.

Its subcellular location is the cytoplasm. Its function is as follows. Associates with the EF-Tu.GDP complex and induces the exchange of GDP to GTP. It remains bound to the aminoacyl-tRNA.EF-Tu.GTP complex up to the GTP hydrolysis stage on the ribosome. The polypeptide is Elongation factor Ts (Aster yellows witches'-broom phytoplasma (strain AYWB)).